The sequence spans 393 residues: S-adenosylmethionine sensor upstream of mTORC1 (393 aa).

The tract at residues 1-35 (MDLRSSAETDPDLSENHPGSVPAELQSRKQEQEKL) is disordered. Residue Arg-94 participates in S-adenosyl-L-methionine binding. Residues 118–141 (DEKSARHATAGNANTDTNAPPQLS) form a disordered region. Low complexity predominate over residues 125–136 (ATAGNANTDTNA). Positions 160, 178, 190, 191, and 232 each coordinate S-adenosyl-L-methionine. The tract at residues 362–393 (ELPETPYDSDSGESQSSSAPFYELEDPILLQS) is disordered.

The protein belongs to the BMT2/SAMTOR family. Interacts with the GATOR1 complex; interaction is disrupted when samtor binds S-adenosyl-L-methionine. Interacts with the KICSTOR complex; interaction is disrupted when bmt2/samtor binds S-adenosyl-L-methionine.

Functionally, S-adenosyl-L-methionine-binding protein that acts as an inhibitor of mTORC1 signaling via interaction with the GATOR1 and KICSTOR complexes. Acts as a sensor of S-adenosyl-L-methionine to signal methionine sufficiency to mTORC1: in presence of methionine, binds S-adenosyl-L-methionine, leading to disrupt interaction with the GATOR1 and KICSTOR complexes and promote mTORC1 signaling. Upon methionine starvation, S-adenosyl-L-methionine levels are reduced, thereby promoting the association with GATOR1 and KICSTOR, leading to inhibit mTORC1 signaling. Probably also acts as a S-adenosyl-L-methionine-dependent methyltransferase. This is S-adenosylmethionine sensor upstream of mTORC1 from Danio rerio (Zebrafish).